Consider the following 148-residue polypeptide: Large ribosomal subunit protein bL9 (148 aa).

The protein belongs to the bacterial ribosomal protein bL9 family.

Functionally, binds to the 23S rRNA. The chain is Large ribosomal subunit protein bL9 from Pseudomonas fluorescens (strain Pf0-1).